Reading from the N-terminus, the 961-residue chain is DNA replication licensing factor MCM2 (961 aa).

Positions 1 to 17 (MDDSENNAPSTPGSPGF) are enriched in polar residues. 2 disordered regions span residues 1-81 (MDDS…FNDN) and 120-220 (AEAE…EEDE). Over residues 39-78 (SDDDDDDVVGAEEAEVDPNVLPEDDGVVAAEEEEDGEDLF) the composition is skewed to acidic residues. Composition is skewed to basic and acidic residues over residues 120-146 (AEAE…LHDQ) and 166-176 (PPREPRTPRSD). The span at 205 to 220 (QTDDDPYEDEFDEEDE) shows a compositional bias: acidic residues. A C4-type zinc finger spans residues 380–406 (CSKCGTVLGPFFQNSYTEVKVGSCPEC). The 207-residue stretch at 524–730 (IGERIVKSIA…FTDEMLARFV (207 aa)) folds into the MCM domain. 574–581 (GDPGTAKS) contributes to the ATP binding site. The Arginine finger signature appears at 706–709 (SRFD).

Belongs to the MCM family. As to quaternary structure, component of the minichromosome maintenance (MCM) complex, a heterotetramer composed of MCM2, MCM3, MCM4, MCM5, MCM6 and MCM7.

The protein resides in the nucleus. The catalysed reaction is ATP + H2O = ADP + phosphate + H(+). Probable component of the MCM2-7 complex (MCM complex) that may function as a DNA helicase and which is essential to undergo a single round of replication initiation and elongation per cell cycle in eukaryotic cells. This is DNA replication licensing factor MCM2 from Oryza sativa subsp. indica (Rice).